Reading from the N-terminus, the 825-residue chain is Osmosensitive cation channel TMEM63C (825 aa).

Over 1 to 50 the chain is Extracellular; it reads MAFESWPAGGVRPVEELDVRSFLMEENSTAERCYRSHSRSSVLQGLPFGG. Residues 51–75 form a helical membrane-spanning segment; that stretch reads VPTVLAINVVLWLILLLIFSCLRKA. Topologically, residues 76–141 are cytoplasmic; sequence AWDYGRLALL…KDEEIRSKCG (66 aa). The segment at 98–117 is disordered; that stretch reads EQSEKEKTPSDSSPSDSETK. A helical membrane pass occupies residues 142 to 174; sequence IDAVTYLSFQRHIILLMMVVCLLSLTIILPVNL. Topologically, residues 175–198 are extracellular; sequence SGNLLGDNPENFGRTTVVNVPAQN. The chain crosses the membrane as a helical span at residues 199–223; the sequence is IFLWLHSIFALLYFVITVLCMAHHS. Residues 224–418 are Cytoplasmic-facing; sequence SRLEYREDEK…IIWENLSVCG (195 aa). Residues 419–448 traverse the membrane as a helical segment; the sequence is PRWWLRCILLNILLFLLLFFLTTPAIIVNT. Over 449 to 463 the chain is Extracellular; sequence MDKFNVTRPVESLRN. A helical membrane pass occupies residues 464–493; the sequence is PVITQFFPTLLLWAFSILLPFIVYYSSFFE. Topologically, residues 494-497 are cytoplasmic; the sequence is YHWT. Residues 498-534 traverse the membrane as a helical segment; the sequence is RSGENQVTMHKCFLLLVFMVIILPSLGLSSLNLFFRW. The Extracellular segment spans residues 535–557; sequence LFDVRFLDETDVKFQCVFLPDNG. A helical membrane pass occupies residues 558 to 590; sequence AFFVNYVITSSLIGTAMELLRIPALLVYSLRLC. Residues 591 to 610 lie on the Cytoplasmic side of the membrane; it reads FAKSKAECIHVKISQAYEFQ. A helical transmembrane segment spans residues 611 to 629; that stretch reads FGLEYAWTMCIFSVSMTYS. At 630 to 632 the chain is on the extracellular side; the sequence is ITC. A helical membrane pass occupies residues 633 to 657; that stretch reads PVIVPFGLLYLVLKHMVDRYNIYYA. Residues 658–664 lie on the Cytoplasmic side of the membrane; that stretch reads YTPTKLN. Residues 665–693 traverse the membrane as a helical segment; that stretch reads QRIHAAAISQVVVAPILCMFWLLFFSVLR. The Extracellular portion of the chain corresponds to 694–698; the sequence is LGPVQ. The helical transmembrane segment at 699–719 threads the bilayer; the sequence is PITLFTFITLLCSIAFSCFGF. The Cytoplasmic segment spans residues 720 to 825; it reads CMKKLRADRS…LLMDSPVAFQ (106 aa). Residues 777-825 form a disordered region; that stretch reads SPAHQSYGTMVNSQSSVRDAEEDEEKDLEETLETELKDDLLMDSPVAFQ. Over residues 779–793 the composition is skewed to polar residues; that stretch reads AHQSYGTMVNSQSSV. Residues 796 to 809 are compositionally biased toward acidic residues; that stretch reads AEEDEEKDLEETLE.

Belongs to the CSC1 (TC 1.A.17) family. In terms of assembly, monomer.

It localises to the endoplasmic reticulum membrane. The protein resides in the cell membrane. It carries out the reaction Ca(2+)(in) = Ca(2+)(out). Functionally, acts as an osmosensitive cation channel preferentially activated upon hypotonic stress. In contrast to tmem63b, does not show phospholipid scramblase activity. Required for the functional integrity of the kidney glomerular filtration barrier. This Danio rerio (Zebrafish) protein is Osmosensitive cation channel TMEM63C (tmem63c).